A 217-amino-acid chain; its full sequence is Probable nicotinate-nucleotide adenylyltransferase (217 aa).

The protein belongs to the NadD family.

The catalysed reaction is nicotinate beta-D-ribonucleotide + ATP + H(+) = deamido-NAD(+) + diphosphate. It functions in the pathway cofactor biosynthesis; NAD(+) biosynthesis; deamido-NAD(+) from nicotinate D-ribonucleotide: step 1/1. In terms of biological role, catalyzes the reversible adenylation of nicotinate mononucleotide (NaMN) to nicotinic acid adenine dinucleotide (NaAD). The chain is Probable nicotinate-nucleotide adenylyltransferase from Baumannia cicadellinicola subsp. Homalodisca coagulata.